The chain runs to 153 residues: Aspartate carbamoyltransferase regulatory chain (153 aa).

Residues cysteine 109, cysteine 114, cysteine 135, and cysteine 138 each contribute to the Zn(2+) site.

This sequence belongs to the PyrI family. In terms of assembly, contains catalytic and regulatory chains. Zn(2+) is required as a cofactor.

In terms of biological role, involved in allosteric regulation of aspartate carbamoyltransferase. This chain is Aspartate carbamoyltransferase regulatory chain, found in Natronomonas pharaonis (strain ATCC 35678 / DSM 2160 / CIP 103997 / JCM 8858 / NBRC 14720 / NCIMB 2260 / Gabara) (Halobacterium pharaonis).